Reading from the N-terminus, the 684-residue chain is Beta-mannosyltransferase 1 (684 aa).

The Cytoplasmic segment spans residues 1–28 (MDKFIQSFSHQYLDSSSSLKLTARRKRK). Residues 29–49 (LTILGLFLFSLISLMIIISYS) form a helical membrane-spanning segment. Residues 50–684 (NNNILPGLSG…KFCKIYGETF (635 aa)) are Extracellular-facing. N-linked (GlcNAc...) asparagine glycosylation is present at N297.

The protein belongs to the BMT family.

Its subcellular location is the membrane. In terms of biological role, beta-mannosyltransferase involved in cell wall biosynthesis. Required for addition of the first beta-mannose residue to acid-stable fraction of cell wall phosphopeptidomannan. Plays a key role in reducing host inflammatory response. In Candida albicans (strain SC5314 / ATCC MYA-2876) (Yeast), this protein is Beta-mannosyltransferase 1 (BMT1).